Consider the following 806-residue polypeptide: Putative phage-related protein YobO (806 aa).

The tract at residues 1–23 is disordered; that stretch reads MVHFKNCPDPSLNANSQSHPEFS. A compositionally biased stretch (polar residues) spans 12-21; that stretch reads LNANSQSHPE. PbH1 repeat units follow at residues 199–221, 237–259, 260–292, 294–315, 419–441, and 448–470; these read VEYG…DITS, SRYI…TTHY, SEYI…EIDD, SRHV…EVKA, SQNI…DINL, and TDYI…SIGG.

This chain is Putative phage-related protein YobO (yobO), found in Bacillus subtilis (strain 168).